Reading from the N-terminus, the 168-residue chain is Sec-independent protein translocase protein TatB (168 aa).

The chain crosses the membrane as a helical span at residues 1–21 (MIDLGISKLALIGAVALIVIG). Disordered regions lie at residues 92 to 132 (FDGS…QGAR) and 146 to 168 (VQSGAARVKRHRPASGRNRSFFE). The span at 94–107 (GSASSSSSSDTGSG) shows a compositional bias: low complexity. Residues 117 to 126 (KSHNGRKSWR) are compositionally biased toward basic residues.

The protein belongs to the TatB family. In terms of assembly, the Tat system comprises two distinct complexes: a TatABC complex, containing multiple copies of TatA, TatB and TatC subunits, and a separate TatA complex, containing only TatA subunits. Substrates initially bind to the TatABC complex, which probably triggers association of the separate TatA complex to form the active translocon.

It localises to the cell inner membrane. Functionally, part of the twin-arginine translocation (Tat) system that transports large folded proteins containing a characteristic twin-arginine motif in their signal peptide across membranes. Together with TatC, TatB is part of a receptor directly interacting with Tat signal peptides. TatB may form an oligomeric binding site that transiently accommodates folded Tat precursor proteins before their translocation. This is Sec-independent protein translocase protein TatB from Cupriavidus metallidurans (strain ATCC 43123 / DSM 2839 / NBRC 102507 / CH34) (Ralstonia metallidurans).